Reading from the N-terminus, the 360-residue chain is LETM1 domain-containing protein 1 (360 aa).

The tract at residues 1-110 (MALSRVCWAR…KKARRIKTNM (110 aa)) is required and sufficient for mitochondrial import. The Cytoplasmic portion of the chain corresponds to 1–137 (MALSRVCWAR…LRQFRRDVTK (137 aa)). Residues 138-158 (CLFLGILSIPPFANYLVFLLM) traverse the membrane as a helical segment. Residues 159-360 (YLFPRQLLIR…LSINYVGSRR (202 aa)) are Mitochondrial intermembrane-facing. In terms of domain architecture, Letm1 RBD spans 186–360 (LRKQSHPEIL…LSINYVGSRR (175 aa)).

Interacts with BRI3BP. Interacts (via C-terminal) with SMARCA4; the interaction regulates transcriptional expression of thermogenic genes in brown adipose tissue.

The protein localises to the mitochondrion outer membrane. Its subcellular location is the nucleus. It is found in the mitochondrion inner membrane. In terms of biological role, plays an essential role for mitochondrial structure and function, as well as thermogenesis of brown adipocytes. In brown adipose tissue also localizes in the nucleus where it interacts with the chromatin remodeler SMARCA4 to regulate thermogenic genes expression, such as UCP1. May regulate phagocytosis and inflammatory responses to lipopolysaccharide in macrophages. Involved in tumorigenesis and may function as a negative regulator of the p53/TP53. The sequence is that of LETM1 domain-containing protein 1 from Bos taurus (Bovine).